Here is a 97-residue protein sequence, read N- to C-terminus: Mitochondrial import inner membrane translocase subunit Tim8 A (97 aa).

A Twin CX3C motif motif is present at residues 43–66 (CWEKCMDKPGPKLDSRAEACFVNC). 2 cysteine pairs are disulfide-bonded: Cys43–Cys66 and Cys47–Cys62. A phosphoserine mark is found at Ser57, Ser87, Ser94, and Ser96.

The protein belongs to the small Tim family. Heterohexamer; composed of 3 copies of TIMM8A and 3 copies of TIMM13, named soluble 70 kDa complex. Associates with the TIM22 complex, whose core is composed of TIMM22.

It localises to the mitochondrion inner membrane. Its function is as follows. Mitochondrial intermembrane chaperone that participates in the import and insertion of some multi-pass transmembrane proteins into the mitochondrial inner membrane. Also required for the transfer of beta-barrel precursors from the TOM complex to the sorting and assembly machinery (SAM complex) of the outer membrane. Acts as a chaperone-like protein that protects the hydrophobic precursors from aggregation and guide them through the mitochondrial intermembrane space. The TIMM8-TIMM13 complex mediates the import of proteins such as TIMM23, SLC25A12/ARALAR1 and SLC25A13/ARALAR2, while the predominant TIMM9-TIMM10 70 kDa complex mediates the import of much more proteins. The polypeptide is Mitochondrial import inner membrane translocase subunit Tim8 A (Timm8a) (Rattus norvegicus (Rat)).